The sequence spans 240 residues: 7-cyano-7-deazaguanine synthase (240 aa).

F14 to L24 serves as a coordination point for ATP. 4 residues coordinate Zn(2+): C202, C217, C220, and C223.

Belongs to the QueC family. Requires Zn(2+) as cofactor.

It catalyses the reaction 7-carboxy-7-deazaguanine + NH4(+) + ATP = 7-cyano-7-deazaguanine + ADP + phosphate + H2O + H(+). It participates in purine metabolism; 7-cyano-7-deazaguanine biosynthesis. Catalyzes the ATP-dependent conversion of 7-carboxy-7-deazaguanine (CDG) to 7-cyano-7-deazaguanine (preQ(0)). The polypeptide is 7-cyano-7-deazaguanine synthase (Rhodopseudomonas palustris (strain BisB18)).